We begin with the raw amino-acid sequence, 320 residues long: GTP 3',8-cyclase (320 aa).

Residues 5-225 (QFDRKINYLR…IQLIKKDEKA (221 aa)) enclose the Radical SAM core domain. Arg14 contributes to the GTP binding site. Cys21 and Cys25 together coordinate [4Fe-4S] cluster. Tyr27 contacts S-adenosyl-L-methionine. Cys28 contacts [4Fe-4S] cluster. Arg64 is a binding site for GTP. Gly68 provides a ligand contact to S-adenosyl-L-methionine. Thr95 contacts GTP. Ser119 contributes to the S-adenosyl-L-methionine binding site. Residue Lys155 participates in GTP binding. S-adenosyl-L-methionine is bound at residue Met189. [4Fe-4S] cluster-binding residues include Cys248 and Cys251. Residue 253-255 (RIR) coordinates GTP. Cys265 is a [4Fe-4S] cluster binding site.

The protein belongs to the radical SAM superfamily. MoaA family. Monomer and homodimer. It depends on [4Fe-4S] cluster as a cofactor.

It carries out the reaction GTP + AH2 + S-adenosyl-L-methionine = (8S)-3',8-cyclo-7,8-dihydroguanosine 5'-triphosphate + 5'-deoxyadenosine + L-methionine + A + H(+). It participates in cofactor biosynthesis; molybdopterin biosynthesis. In terms of biological role, catalyzes the cyclization of GTP to (8S)-3',8-cyclo-7,8-dihydroguanosine 5'-triphosphate. In Campylobacter jejuni subsp. doylei (strain ATCC BAA-1458 / RM4099 / 269.97), this protein is GTP 3',8-cyclase.